The primary structure comprises 105 residues: Cyclotide vibi-J (105 aa).

A signal peptide spans 1–9 (AAFALPALA). Positions 10 to 71 (TSFEKDFITH…KSSNSINALG (62 aa)) are excised as a propeptide. The segment at residues 72 to 102 (GTFPCGESCVWIPCISKVIGCACKSKVCYKN) is a cross-link (cyclopeptide (Gly-Asn)). 3 cysteine pairs are disulfide-bonded: Cys76-Cys92, Cys80-Cys94, and Cys85-Cys99. Positions 103–105 (SLA) are excised as a propeptide.

Post-translationally, this is a cyclic peptide.

Probably participates in a plant defense mechanism. The chain is Cyclotide vibi-J from Viola biflora (Yellow wood violet).